The sequence spans 762 residues: Cellulose synthase-like protein H2 (762 aa).

The span at 1 to 15 (MAVVAAAAATGSTTR) shows a compositional bias: low complexity. Residues 1–39 (MAVVAAAAATGSTTRSGGGGGEGTRSGRKKPPPPPLQER) are disordered. Helical transmembrane passes span 47–67 (AWAWRLAGLAVLLLLLALLAL) and 81–101 (GVWRVALVCEAWFAALCALNV). Active-site residues include aspartate 180 and aspartate 470. 6 helical membrane-spanning segments follow: residues 541–561 (LAYLIVLGWPLRAPFELCYGL), 582–602 (FSVPLALFISYNTYNFMEYMA), 619–639 (IISVSAWTLAFLTVLLKSLGL), 673–693 (LPVFIPVTALAMLNIVAVTVG), 708–728 (APGIGEFMCCGWLVLCFFPFV), and 739–759 (GIPWSVKLKASLLVAMFVTFC).

The protein belongs to the glycosyltransferase 2 family. Plant cellulose synthase-like H subfamily.

It is found in the golgi apparatus membrane. In terms of biological role, thought to be a Golgi-localized beta-glycan synthase that polymerize the backbones of noncellulosic polysaccharides (hemicelluloses) of plant cell wall. In Oryza sativa subsp. indica (Rice), this protein is Cellulose synthase-like protein H2 (CSLH2).